We begin with the raw amino-acid sequence, 270 residues long: Putative pyruvate, phosphate dikinase regulatory protein 2 (270 aa).

Gly151 to Thr158 serves as a coordination point for ADP.

It belongs to the pyruvate, phosphate/water dikinase regulatory protein family. PDRP subfamily.

It catalyses the reaction N(tele)-phospho-L-histidyl/L-threonyl-[pyruvate, phosphate dikinase] + ADP = N(tele)-phospho-L-histidyl/O-phospho-L-threonyl-[pyruvate, phosphate dikinase] + AMP + H(+). It carries out the reaction N(tele)-phospho-L-histidyl/O-phospho-L-threonyl-[pyruvate, phosphate dikinase] + phosphate + H(+) = N(tele)-phospho-L-histidyl/L-threonyl-[pyruvate, phosphate dikinase] + diphosphate. In terms of biological role, bifunctional serine/threonine kinase and phosphorylase involved in the regulation of the pyruvate, phosphate dikinase (PPDK) by catalyzing its phosphorylation/dephosphorylation. The sequence is that of Putative pyruvate, phosphate dikinase regulatory protein 2 from Listeria welshimeri serovar 6b (strain ATCC 35897 / DSM 20650 / CCUG 15529 / CIP 8149 / NCTC 11857 / SLCC 5334 / V8).